The primary structure comprises 338 residues: Lipoate-protein ligase A (338 aa).

Residues 29–216 (PATQRVLFLW…AFFAHYGERV (188 aa)) enclose the BPL/LPL catalytic domain. Residues Arg71, 76–79 (GAVF), and Lys134 each bind ATP. Lys134 is a (R)-lipoate binding site.

The protein belongs to the LplA family. Monomer.

It is found in the cytoplasm. It carries out the reaction L-lysyl-[lipoyl-carrier protein] + (R)-lipoate + ATP = N(6)-[(R)-lipoyl]-L-lysyl-[lipoyl-carrier protein] + AMP + diphosphate + H(+). It participates in protein modification; protein lipoylation via exogenous pathway; protein N(6)-(lipoyl)lysine from lipoate: step 1/2. Its pathway is protein modification; protein lipoylation via exogenous pathway; protein N(6)-(lipoyl)lysine from lipoate: step 2/2. Functionally, catalyzes both the ATP-dependent activation of exogenously supplied lipoate to lipoyl-AMP and the transfer of the activated lipoyl onto the lipoyl domains of lipoate-dependent enzymes. The chain is Lipoate-protein ligase A from Salmonella paratyphi C (strain RKS4594).